We begin with the raw amino-acid sequence, 1086 residues long: Isoleucine--tRNA ligase (1086 aa).

A 'HIGH' region motif is present at residues Pro53–His63. The 'KMSKS' region motif lies at Lys624–Arg628. Lys627 is an ATP binding site.

This sequence belongs to the class-I aminoacyl-tRNA synthetase family. IleS type 2 subfamily. As to quaternary structure, monomer. Zn(2+) is required as a cofactor.

Its subcellular location is the cytoplasm. It carries out the reaction tRNA(Ile) + L-isoleucine + ATP = L-isoleucyl-tRNA(Ile) + AMP + diphosphate. In terms of biological role, catalyzes the attachment of isoleucine to tRNA(Ile). As IleRS can inadvertently accommodate and process structurally similar amino acids such as valine, to avoid such errors it has two additional distinct tRNA(Ile)-dependent editing activities. One activity is designated as 'pretransfer' editing and involves the hydrolysis of activated Val-AMP. The other activity is designated 'posttransfer' editing and involves deacylation of mischarged Val-tRNA(Ile). This is Isoleucine--tRNA ligase from Rickettsia typhi (strain ATCC VR-144 / Wilmington).